The primary structure comprises 160 residues: Small ribosomal subunit protein uS17m (160 aa).

The protein belongs to the universal ribosomal protein uS17 family. As to quaternary structure, component of the mitochondrial ribosome small subunit (28S) which comprises a 12S rRNA and about 30 distinct proteins.

It is found in the mitochondrion. The chain is Small ribosomal subunit protein uS17m (mrps-17) from Caenorhabditis elegans.